Consider the following 80-residue polypeptide: Protein transport protein SSS1 (80 aa).

The Cytoplasmic segment spans residues 1–46; it reads MARASEKGEEKKQSNNQVEKLVEAPVEFVREGTQFLAKCKKPDLKE. The chain crosses the membrane as a helical span at residues 47-75; sequence YTKIVKAVGIGFIAVGIIGYAIKLIHIPI. Residues 76–80 are Extracellular-facing; that stretch reads RYVIV.

The protein belongs to the SecE/SEC61-gamma family. As to quaternary structure, component of the heterotrimeric Sec61 complex, which is composed of SSH1, SBH1 and SSS1. Presumably three to four Sec61 heterotrimers assemble into an oligomeric ring with a central aqueous pore. In cotranslational ER import, the pore diameter varies from 9-15 A in a ribosome-free resting state to 40-60 A in a functional state when associated with the ribosome. The Sec61 complex is part of a channel-forming translocon complex whose composition seem to change dependent upon different functional states. During post-translational ER import the Sec61 complex associates with the Sec62/63 complex to form the Sec complex. SSH1 is a component of the heterotrimeric Ssh1 complex, which is composed of SSH1, SBH2 and SSS1. SSS1 interacts with OST1, OST4, SWP1 and WBP1, components of the OT complex.

Its subcellular location is the endoplasmic reticulum membrane. Part of the Sec61 complex, which is the major component of channel-forming translocon complex that mediates protein translocation across the endoplasmic reticulum (ER). The functional states of the translocon complex include co- and post-translational ER import, cotranslational membrane protein integration and retrograde transport of misfolded proteins out of the ER. In the cotranslational pathway, ribosomes synthesizing presecretory proteins are targeted to the translocon by the cytosolic signal recognition particle (SRP) and its ER-localized receptor. The association of the Sec61 complex with the ribosome is mediated by the 28S rRNA of the large ribosomal subunit. SRP-independent post-translational translocation requires the association of additional factors, such as the Sec62/63 complex and KAR2. Also part of the Ssh1 complex, which probably is the major component of a channel-forming translocon complex that may function exclusively in the cotranslational pathway of protein ER import. The polypeptide is Protein transport protein SSS1 (SSS1) (Saccharomyces cerevisiae (strain ATCC 204508 / S288c) (Baker's yeast)).